The following is a 153-amino-acid chain: Riboflavin synthase (153 aa).

This sequence belongs to the DMRL synthase family. In terms of assembly, homooligomer. Mg(2+) serves as cofactor.

The enzyme catalyses 2 6,7-dimethyl-8-(1-D-ribityl)lumazine + H(+) = 5-amino-6-(D-ribitylamino)uracil + riboflavin. It participates in cofactor biosynthesis; riboflavin biosynthesis; riboflavin from 2-hydroxy-3-oxobutyl phosphate and 5-amino-6-(D-ribitylamino)uracil: step 2/2. Inhibited by EDTA. Functionally, the relatively low activity of this enzyme suggested that 6,7-dimethyl-8-ribityllumazine might not be its natural substrate. In Methanothermobacter marburgensis (strain ATCC BAA-927 / DSM 2133 / JCM 14651 / NBRC 100331 / OCM 82 / Marburg) (Methanobacterium thermoautotrophicum), this protein is Riboflavin synthase (ribC).